Reading from the N-terminus, the 270-residue chain is Probable 6-oxopurine nucleoside phosphorylase (270 aa).

Phosphate-binding positions include Ser-10 and 48 to 49 (RH). Residue Met-191 participates in substrate binding. Thr-192 provides a ligand contact to phosphate. Position 215-217 (215-217 (NYA)) interacts with substrate.

It belongs to the PNP/MTAP phosphorylase family. MTAP subfamily. In terms of assembly, homohexamer. Dimer of a homotrimer.

It catalyses the reaction a purine D-ribonucleoside + phosphate = a purine nucleobase + alpha-D-ribose 1-phosphate. Its pathway is purine metabolism; purine nucleoside salvage. Purine nucleoside phosphorylase which is highly specific for 6-oxopurine nucleosides. Cleaves guanosine or inosine to respective bases and sugar-1-phosphate molecules. Involved in purine salvage. The chain is Probable 6-oxopurine nucleoside phosphorylase from Korarchaeum cryptofilum (strain OPF8).